Reading from the N-terminus, the 528-residue chain is UDP-glucuronosyltransferase 2B10 (528 aa).

Positions 1-23 (MALKWTTVLLIQLSFYFSSGSCG) are cleaved as a signal peptide. The N-linked (GlcNAc...) asparagine glycan is linked to asparagine 66. Lysine 134 carries the post-translational modification N6-succinyllysine. 2 N-linked (GlcNAc...) asparagine glycosylation sites follow: asparagine 314 and asparagine 481. A helical membrane pass occupies residues 492 to 512 (VIGFLLACVATVLFIITKCCL).

Belongs to the UDP-glycosyltransferase family.

The protein resides in the microsome membrane. It is found in the endoplasmic reticulum membrane. It catalyses the reaction glucuronate acceptor + UDP-alpha-D-glucuronate = acceptor beta-D-glucuronoside + UDP + H(+). UDPGT is of major importance in the conjugation and subsequent elimination of potentially toxic xenobiotics and endogenous compounds. The chain is UDP-glucuronosyltransferase 2B10 (UGT2B10) from Homo sapiens (Human).